We begin with the raw amino-acid sequence, 428 residues long: uncharacterized protein (428 aa).

The next 10 membrane-spanning stretches (helical) occupy residues 26–46, 51–71, 90–110, 135–155, 177–197, 223–243, 278–298, 314–334, 359–379, and 407–427; these read VALT…DDVF, AGID…VSVL, AAPL…SALL, TPFL…TLVG, MAPA…WLLG, LLIK…AHPV, TLLF…TGVV, LLTV…IDNI, TFWW…AVAA, and VVTA…YFVF.

It belongs to the CitM (TC 2.A.11) transporter family.

Its subcellular location is the cell membrane. This is an uncharacterized protein from Mycobacterium tuberculosis (strain CDC 1551 / Oshkosh).